The primary structure comprises 212 residues: tRNA(Phe) 7-((3-amino-3-carboxypropyl)-4-demethylwyosine(37)-N(4))-methyltransferase 2 (212 aa).

The protein belongs to the TYW3 family.

It carries out the reaction 4-demethyl-7-[(3S)-3-amino-3-carboxypropyl]wyosine(37) in tRNA(Phe) + S-adenosyl-L-methionine = 7-[(3S)-3-amino-3-carboxypropyl]wyosine(37) in tRNA(Phe) + S-adenosyl-L-homocysteine + H(+). S-adenosyl-L-methionine-dependent methyltransferase that acts as a component of the wyosine derivatives biosynthesis pathway. Probably methylates N-4 position of wybutosine-86 to produce wybutosine-72. In Thermococcus kodakarensis (strain ATCC BAA-918 / JCM 12380 / KOD1) (Pyrococcus kodakaraensis (strain KOD1)), this protein is tRNA(Phe) 7-((3-amino-3-carboxypropyl)-4-demethylwyosine(37)-N(4))-methyltransferase 2.